Reading from the N-terminus, the 506-residue chain is Kynurenine 3-monooxygenase (506 aa).

The interval 153–174 (QETSLLPGEESEKDKKQNTEDE) is disordered. The span at 162–171 (ESEKDKKQNT) shows a compositional bias: basic and acidic residues.

Belongs to the aromatic-ring hydroxylase family. KMO subfamily. It depends on FAD as a cofactor.

It is found in the mitochondrion outer membrane. It catalyses the reaction L-kynurenine + NADPH + O2 + H(+) = 3-hydroxy-L-kynurenine + NADP(+) + H2O. The protein operates within cofactor biosynthesis; NAD(+) biosynthesis; quinolinate from L-kynurenine: step 1/3. In terms of biological role, catalyzes the hydroxylation of L-kynurenine (L-Kyn) to form 3-hydroxy-L-kynurenine (L-3OHKyn). Required for synthesis of quinolinic acid. The polypeptide is Kynurenine 3-monooxygenase (Cryptococcus neoformans var. neoformans serotype D (strain JEC21 / ATCC MYA-565) (Filobasidiella neoformans)).